Reading from the N-terminus, the 150-residue chain is D-aminoacyl-tRNA deacylase (150 aa).

The Gly-cisPro motif, important for rejection of L-amino acids signature appears at 136 to 137; it reads GP.

The protein belongs to the DTD family. Homodimer.

The protein localises to the cytoplasm. The enzyme catalyses glycyl-tRNA(Ala) + H2O = tRNA(Ala) + glycine + H(+). It carries out the reaction a D-aminoacyl-tRNA + H2O = a tRNA + a D-alpha-amino acid + H(+). An aminoacyl-tRNA editing enzyme that deacylates mischarged D-aminoacyl-tRNAs. Also deacylates mischarged glycyl-tRNA(Ala), protecting cells against glycine mischarging by AlaRS. Acts via tRNA-based rather than protein-based catalysis; rejects L-amino acids rather than detecting D-amino acids in the active site. By recycling D-aminoacyl-tRNA to D-amino acids and free tRNA molecules, this enzyme counteracts the toxicity associated with the formation of D-aminoacyl-tRNA entities in vivo and helps enforce protein L-homochirality. The polypeptide is D-aminoacyl-tRNA deacylase (Staphylococcus haemolyticus (strain JCSC1435)).